Here is a 318-residue protein sequence, read N- to C-terminus: Pantothenate kinase (318 aa).

Residue 96–103 (GSVAVGKS) coordinates ATP.

This sequence belongs to the prokaryotic pantothenate kinase family.

It localises to the cytoplasm. The enzyme catalyses (R)-pantothenate + ATP = (R)-4'-phosphopantothenate + ADP + H(+). It participates in cofactor biosynthesis; coenzyme A biosynthesis; CoA from (R)-pantothenate: step 1/5. The sequence is that of Pantothenate kinase from Rhodopseudomonas palustris (strain ATCC BAA-98 / CGA009).